The primary structure comprises 145 residues: Large ribosomal subunit protein bL9 (145 aa).

The protein belongs to the bacterial ribosomal protein bL9 family.

Binds to the 23S rRNA. This is Large ribosomal subunit protein bL9 from Ureaplasma parvum serovar 3 (strain ATCC 700970).